Consider the following 347-residue polypeptide: Anthranilate phosphoribosyltransferase (347 aa).

Residues G88, G91 to D92, T96, N98 to T101, K116 to S124, and S128 each bind 5-phospho-alpha-D-ribose 1-diphosphate. G88 contacts anthranilate. S100 lines the Mg(2+) pocket. N119 is an anthranilate binding site. Anthranilate is bound at residue R174. Mg(2+)-binding residues include D232 and E233.

Belongs to the anthranilate phosphoribosyltransferase family. In terms of assembly, homodimer. Requires Mg(2+) as cofactor.

The enzyme catalyses N-(5-phospho-beta-D-ribosyl)anthranilate + diphosphate = 5-phospho-alpha-D-ribose 1-diphosphate + anthranilate. It functions in the pathway amino-acid biosynthesis; L-tryptophan biosynthesis; L-tryptophan from chorismate: step 2/5. Functionally, catalyzes the transfer of the phosphoribosyl group of 5-phosphorylribose-1-pyrophosphate (PRPP) to anthranilate to yield N-(5'-phosphoribosyl)-anthranilate (PRA). The sequence is that of Anthranilate phosphoribosyltransferase from Shewanella sp. (strain MR-4).